A 133-amino-acid chain; its full sequence is C-C motif chemokine 21b (133 aa).

Residues methionine 1–glycine 23 form the signal peptide. Disulfide bonds link cysteine 31-cysteine 57, cysteine 32-cysteine 75, and cysteine 103-cysteine 122. Residues methionine 87 to glycine 133 are disordered. The segment at lysine 98–glycine 133 is C-terminal basic extension. Residues arginine 104–cysteine 122 are compositionally biased toward basic residues.

Belongs to the intercrine beta (chemokine CC) family. Binds to CCR7 and to CXCR3. Interacts with PDPN; relocalizes PDPN to the basolateral membrane. Interacts with GPR174. As to expression, expressed strongly in lung, spleen, thymus, peripheral and mesentric lymph nodes. Also expressed in the testis, kidney, liver, and heart.

Its subcellular location is the secreted. Its function is as follows. Inhibits hemopoiesis and stimulates chemotaxis. Chemotactic in vitro for thymocytes and activated T-cells, but not for B-cells, macrophages, or neutrophils. Potent mesangial cell chemoattractant. Shows preferential activity towards naive T-cells. May play a role in mediating homing of lymphocytes to secondary lymphoid organs. In Mus musculus (Mouse), this protein is C-C motif chemokine 21b (Ccl21b).